A 756-amino-acid polypeptide reads, in one-letter code: Cellulose synthase catalytic subunit [UDP-forming] (756 aa).

A run of 4 helical transmembrane segments spans residues 27 to 47 (ASYI…TVTL), 49 to 69 (NNEQ…VGRG), 106 to 126 (GILG…LFLS), and 167 to 187 (LTVL…VYIL). The catalytic subdomain A stretch occupies residues 147 to 242 (DWPTVDIFIP…YILILDCDHI (96 aa)). The active site involves aspartate 189. Substrate is bound by residues aspartate 238 and aspartate 240. The segment at 319–379 (EAIESIGGFA…GQRMRWARGM (61 aa)) is catalytic subdomain B. Aspartate 335 is an active-site residue. 5 helical membrane-spanning segments follow: residues 409-429 (FFFA…LFAG), 432-452 (IIAA…FHSI), 470-490 (VYET…LLFP), 517-537 (NIIF…ELIV), and 551-571 (LLNC…IAVG). Positions 576–681 (QVRYNHRVEA…ERDIVRFVFG (106 aa)) constitute a PilZ domain. The tract at residues 721-756 (NSRPKKKPLALPVERREPTTIHSGQTQEGKISRAAS) is disordered. Residues 740 to 756 (TIHSGQTQEGKISRAAS) are compositionally biased toward polar residues.

The protein belongs to the glycosyltransferase 2 family. Mg(2+) is required as a cofactor.

The protein localises to the cell inner membrane. It carries out the reaction [(1-&gt;4)-beta-D-glucosyl](n) + UDP-alpha-D-glucose = [(1-&gt;4)-beta-D-glucosyl](n+1) + UDP + H(+). It functions in the pathway glycan metabolism; bacterial cellulose biosynthesis. Its activity is regulated as follows. Activated by bis-(3'-5') cyclic diguanylic acid (c-di-GMP). Its function is as follows. Catalytic subunit of cellulose synthase. It polymerizes uridine 5'-diphosphate glucose to cellulose. The thick cellulosic mats generated by this enzyme probably provide a specialized protective environment to the bacterium. The sequence is that of Cellulose synthase catalytic subunit [UDP-forming] (bcsA) from Komagataeibacter sucrofermentans (strain ATCC 700178 / DSM 15973 / CECT 7291 / JCM 9730 / LMG 18788 / BPR 2001) (Acetobacter xylinus subsp. sucrofermentans).